Here is a 358-residue protein sequence, read N- to C-terminus: Protein-arginine kinase (358 aa).

Residues 23 to 250 enclose the Phosphagen kinase C-terminal domain; it reads VWPVTTFSLA…SKLSVAEVAA (228 aa). ATP-binding positions include 26-30, 174-178, and 203-208; these read VTTFS, KSQCF, and SSLLLG.

Belongs to the ATP:guanido phosphotransferase family.

It catalyses the reaction L-arginyl-[protein] + ATP = N(omega)-phospho-L-arginyl-[protein] + ADP + H(+). Functionally, catalyzes the specific phosphorylation of arginine residues in proteins. The chain is Protein-arginine kinase from Chlamydia pneumoniae (Chlamydophila pneumoniae).